The following is a 111-amino-acid chain: Nucleoid-associated protein NMA1657 (111 aa).

This sequence belongs to the YbaB/EbfC family. In terms of assembly, homodimer.

The protein localises to the cytoplasm. It is found in the nucleoid. Its function is as follows. Binds to DNA and alters its conformation. May be involved in regulation of gene expression, nucleoid organization and DNA protection. This Neisseria meningitidis serogroup A / serotype 4A (strain DSM 15465 / Z2491) protein is Nucleoid-associated protein NMA1657.